The following is a 1370-amino-acid chain: Histidine kinase P4 (1370 aa).

The signal sequence occupies residues M1 to K20. A helical transmembrane segment spans residues W799–L819. A Histidine kinase domain is found at N852–R1072. H855 bears the Phosphohistidine; by autocatalysis mark. One can recognise a Response regulatory domain in the interval T1119 to L1234. Residue D1167 is modified to 4-aspartylphosphate. The 100-residue stretch at K1266–R1365 folds into the HTH araC/xylS-type domain. DNA-binding regions (H-T-H motif) lie at residues L1284–T1305 and I1332–F1355.

Autophosphorylated. Activation requires a sequential transfer of a phosphate group from a His in the primary transmitter domain, to an Asp in the receiver domain and to a His in the secondary transmitter domain.

The protein resides in the membrane. Its subcellular location is the cell surface. The enzyme catalyses ATP + protein L-histidine = ADP + protein N-phospho-L-histidine.. Histidine kinase probably involved in ulvan degradation. Ulvan is the main polysaccharide component of the Ulvales (green seaweed) cell wall. It is composed of disaccharide building blocks comprising 3-sulfated rhamnose (Rha3S) linked to D-glucuronic acid (GlcA), L-iduronic acid (IduA), or D-xylose (Xyl). The sequence is that of Histidine kinase P4 from Formosa agariphila (strain DSM 15362 / KCTC 12365 / LMG 23005 / KMM 3901 / M-2Alg 35-1).